We begin with the raw amino-acid sequence, 33 residues long: Defensin-1 (33 aa).

Intrachain disulfides connect Cys4–Cys32, Cys6–Cys21, and Cys11–Cys31.

The protein belongs to the alpha-defensin family.

The protein resides in the secreted. Its function is as follows. Has antibacterial activity against the Gram-negative bacterium E.coli and the Gram-positive bacteria L.monocytogenes and S.aureus. Has antifungal activity against C.albicans. The protein is Defensin-1 of Papio hamadryas (Hamadryas baboon).